The following is a 450-amino-acid chain: MDHQDPYSVQATAAIAAAITFLILFTIFGNALVILAVLTSRSLRAPQNLFLVSLAAADILVATLIIPFSLANELLGYWYFRRTWCEVYLALDVLFCTSSIVHLCAISLDRYWAVSRALEYNSKRTPRRIKCIILTVWLIAAVISLPPLIYKGDQGPQPRGRPQCKLNQEAWYILASSIGSFFAPCLIMILVYLRIYLIAKRSNRRGPRAKGGPGQGESKQPRPDHGGALASAKLPALASVASAREVNGHSKSTGEKEEGETPEDTGTRALPPSWAALPNSGQGQKEGVCGASPEDEAEEEEEEEEEEEECEPQAVPVSPASACSPPLQQPQGSRVLATLRGQVLLGRGVGAIGGQWWRRRAQLTREKRFTFVLAVVIGVFVLCWFPFFFSYSLGAICPKHCKVPHGLFQFFFWIGYCNSSLNPVIYTIFNQDFRRAFRRILCRPWTQTAW.

Over 1-12 (MDHQDPYSVQAT) the chain is Extracellular. A helical transmembrane segment spans residues 13-38 (AAIAAAITFLILFTIFGNALVILAVL). The Cytoplasmic portion of the chain corresponds to 39–48 (TSRSLRAPQN). Residues 49-69 (LFLVSLAAADILVATLIIPFS) form a helical membrane-spanning segment. Over 70 to 86 (LANELLGYWYFRRTWCE) the chain is Extracellular. An intrachain disulfide couples cysteine 85 to cysteine 164. A helical membrane pass occupies residues 87 to 107 (VYLALDVLFCTSSIVHLCAIS). Residues 108 to 128 (LDRYWAVSRALEYNSKRTPRR) lie on the Cytoplasmic side of the membrane. Residues 129 to 149 (IKCIILTVWLIAAVISLPPLI) form a helical membrane-spanning segment. Over 150-172 (YKGDQGPQPRGRPQCKLNQEAWY) the chain is Extracellular. The chain crosses the membrane as a helical span at residues 173–193 (ILASSIGSFFAPCLIMILVYL). The Cytoplasmic portion of the chain corresponds to 194–368 (RIYLIAKRSN…RRAQLTREKR (175 aa)). 2 disordered regions span residues 204–229 (RRGP…GGAL) and 241–329 (ASAR…PLQQ). The span at 246-256 (VNGHSKSTGEK) shows a compositional bias: basic and acidic residues. A compositionally biased stretch (acidic residues) spans 293-311 (PEDEAEEEEEEEEEEEECE). The segment covering 312–326 (PQAVPVSPASACSPP) has biased composition (low complexity). Residues 369–389 (FTFVLAVVIGVFVLCWFPFFF) traverse the membrane as a helical segment. Residues 390 to 405 (SYSLGAICPKHCKVPH) lie on the Extracellular side of the membrane. The chain crosses the membrane as a helical span at residues 406 to 426 (GLFQFFFWIGYCNSSLNPVIY). The Cytoplasmic portion of the chain corresponds to 427–450 (TIFNQDFRRAFRRILCRPWTQTAW). Cysteine 442 carries S-palmitoyl cysteine lipidation.

This sequence belongs to the G-protein coupled receptor 1 family. Adrenergic receptor subfamily. ADRA2B sub-subfamily. Interacts with RAB26. Interacts with PPP1R9B. Interacts with GGA1, GGA2 and GGA3.

Its subcellular location is the cell membrane. Its function is as follows. Alpha-2 adrenergic receptors mediate the catecholamine-induced inhibition of adenylate cyclase through the action of G proteins. The rank order of potency for agonists of this receptor is clonidine &gt; norepinephrine &gt; epinephrine = oxymetazoline &gt; dopamine &gt; p-tyramine = phenylephrine &gt; serotonin &gt; p-synephrine / p-octopamine. For antagonists, the rank order is yohimbine &gt; chlorpromazine &gt; phentolamine &gt; mianserine &gt; spiperone &gt; prazosin &gt; alprenolol &gt; propanolol &gt; pindolol. The polypeptide is Alpha-2B adrenergic receptor (ADRA2B) (Homo sapiens (Human)).